A 412-amino-acid polypeptide reads, in one-letter code: Acyl-[acyl-carrier-protein] hydrolase FATB3, chloroplastic (412 aa).

A compositionally biased stretch (low complexity) spans 1–25 (MVAAAASSAFFSFPTPGTSPKPGKF). The N-terminal 50 residues, 1–50 (MVAAAASSAFFSFPTPGTSPKPGKFGNWPSSLSIPFNPKSNHNGGIQVKA), are a transit peptide targeting the chloroplast. Residues 1-63 (MVAAAASSAF…AHPKANGSAV (63 aa)) are disordered. Over residues 28 to 44 (WPSSLSIPFNPKSNHNG) the composition is skewed to polar residues. Active-site residues include N310, H312, and C347. Residues 393–412 (NAGATGAVSTGKTSNGNSVS) are disordered. The span at 399-412 (AVSTGKTSNGNSVS) shows a compositional bias: polar residues.

The protein belongs to the acyl-ACP thioesterase family.

It localises to the plastid. The protein localises to the chloroplast. It carries out the reaction tetradecanoyl-[ACP] + H2O = tetradecanoate + holo-[ACP] + H(+). Its function is as follows. Plays an essential role in chain termination during de novo fatty acid synthesis. Possesses thioesterase activity for medium chain acyl-ACPs. Main substrate is 14:0. The chain is Acyl-[acyl-carrier-protein] hydrolase FATB3, chloroplastic from Cuphea viscosissima (Blue waxweed).